Here is a 341-residue protein sequence, read N- to C-terminus: Anthranilate phosphoribosyltransferase (341 aa).

5-phospho-alpha-D-ribose 1-diphosphate contacts are provided by residues Gly84, 87-88 (GD), Thr92, 94-97 (NIST), 112-120 (KHGNRSVSS), and Ser124. Gly84 provides a ligand contact to anthranilate. Ser96 contributes to the Mg(2+) binding site. An anthranilate-binding site is contributed by Asn115. Arg170 serves as a coordination point for anthranilate. Residues Asp229 and Glu230 each coordinate Mg(2+).

This sequence belongs to the anthranilate phosphoribosyltransferase family. As to quaternary structure, homodimer. Mg(2+) is required as a cofactor.

The catalysed reaction is N-(5-phospho-beta-D-ribosyl)anthranilate + diphosphate = 5-phospho-alpha-D-ribose 1-diphosphate + anthranilate. It participates in amino-acid biosynthesis; L-tryptophan biosynthesis; L-tryptophan from chorismate: step 2/5. Its function is as follows. Catalyzes the transfer of the phosphoribosyl group of 5-phosphorylribose-1-pyrophosphate (PRPP) to anthranilate to yield N-(5'-phosphoribosyl)-anthranilate (PRA). In Polynucleobacter asymbioticus (strain DSM 18221 / CIP 109841 / QLW-P1DMWA-1) (Polynucleobacter necessarius subsp. asymbioticus), this protein is Anthranilate phosphoribosyltransferase.